We begin with the raw amino-acid sequence, 302 residues long: tRNA pseudouridine synthase B (302 aa).

The Nucleophile role is filled by D45.

This sequence belongs to the pseudouridine synthase TruB family. Type 1 subfamily.

The catalysed reaction is uridine(55) in tRNA = pseudouridine(55) in tRNA. Functionally, responsible for synthesis of pseudouridine from uracil-55 in the psi GC loop of transfer RNAs. The sequence is that of tRNA pseudouridine synthase B from Francisella tularensis subsp. tularensis (strain FSC 198).